The primary structure comprises 377 residues: Carboxynorspermidine/carboxyspermidine decarboxylase (377 aa).

An N6-(pyridoxal phosphate)lysine modification is found at K41. Positions 238 and 274 each coordinate substrate.

Belongs to the Orn/Lys/Arg decarboxylase class-II family. NspC subfamily. Homodimer. Requires pyridoxal 5'-phosphate as cofactor.

It is found in the cytoplasm. The catalysed reaction is carboxynorspermidine + H(+) = norspermidine + CO2. It catalyses the reaction carboxyspermidine + H(+) = spermidine + CO2. Its activity is regulated as follows. Dithiothreitol greatly stimulates activity, maximum stimulation being at 5-20 mM dithiothreitol concentration. Fe(3+), Fe(2+) and Mn(2+) severely inhibit activity (88%, 82% and 50%, respectively), whereas Zn(2+) has a slightly inhibitory effect (23%) and Mg(2+), Ca(2+), Cu(2+) and Cu(+) have no effect. In terms of biological role, catalyzes the decarboxylation of carboxynorspermidine and carboxyspermidine. 2,3-diaminopropionic acid, 2,4-diaminobutyric acid, L-ornithine or L-lysine cannot serve as substrates. This is Carboxynorspermidine/carboxyspermidine decarboxylase from Vibrio alginolyticus.